We begin with the raw amino-acid sequence, 192 residues long: Putative integrase/recombinase y4gC (192 aa).

One can recognise a Tyr recombinase domain in the interval 1 to 183 (MPSILERDQI…ATEDLRAIAL (183 aa)). Active-site residues include arginine 41, lysine 66, histidine 135, arginine 138, and histidine 161. Tyrosine 170 (O-(3'-phospho-DNA)-tyrosine intermediate) is an active-site residue.

Belongs to the 'phage' integrase family.

The protein is Putative integrase/recombinase y4gC of Sinorhizobium fredii (strain NBRC 101917 / NGR234).